A 79-amino-acid polypeptide reads, in one-letter code: Ponericin-W-like 32.1 (79 aa).

Residues 1–23 (MKCKKQLLVIFFAYFLVVNESEA) form the signal peptide. A propeptide spanning residues 49–79 (RALMKRDLEDIMDPYQKNLKLDRYLRRLAMD) is cleaved from the precursor.

This sequence belongs to the non-disulfide-bridged peptide (NDBP) superfamily. Medium-length antimicrobial peptide (group 3) family. Ponericin-W subfamily. In terms of tissue distribution, expressed by the venom gland.

Its subcellular location is the secreted. The protein resides in the target cell membrane. In terms of biological role, antimicrobial peptide with potent activity against a range of Gram-positive and Gram-negative bacteria. Has high hemolytic activity against erythrocytes. May act by disrupting the integrity of the bacterial cell membrane. The protein is Ponericin-W-like 32.1 of Lychas mucronatus (Chinese swimming scorpion).